The chain runs to 508 residues: Cytochrome P450 monooxygenase orf4 (508 aa).

Residue Cys447 coordinates heme.

Belongs to the cytochrome P450 family. Heme serves as cofactor.

It participates in mycotoxin biosynthesis. Functionally, cytochrome P450 monooxygenase; part of the gene cluster that mediates the biosynthesis of brefeldin A (BFA), a protein transport inhibitor that shows antiviral, antifungal, and antitumor properties. The proposed biosynthesis of BFA involves formation of an acyclic polyketide chain that is differentially tailored throughout the backbone. The highly reducing polyketide synthase Bref-PKS is proposed to synthesize the precisely reduced octaketide precursor, which could then be directly offloaded by the thiohydrolase enzyme Bref-TH followed by a cytochrome P450 monooxygenase-mediated formation of the cyclopentane ring and macrocyclization to afford 7-deoxy BFA. Alternatively, the first ring annulation can also occur on the ACP-tethered intermediate before the thiohydrolase release and lactonization. The C7-hydroxylation by another cytochrome P450 monooxygenase is believed to be the final step in the process to obtain the final structure of BFA. In addition to the HRPKS Bref-PKS and the thiohydrolase Bref-TH, the brefeldin A biosynthesis cluster contains 4 cytochrome p450 monooxygenases (called orf3 to orf6), as well a the probable cluster-specific transcription regulator orf8. This Eupenicillium brefeldianum (Penicillium brefeldianum) protein is Cytochrome P450 monooxygenase orf4.